Consider the following 557-residue polypeptide: Hepatocyte nuclear factor 1-beta (557 aa).

The segment at 1–31 (MVSKLTSLQQELLSALLSSGVTKEVLIQALE) is dimerization. Residues 1 to 32 (MVSKLTSLQQELLSALLSSGVTKEVLIQALEE) form the HNF-p1 domain. 4 positions are modified to phosphoserine: S49, S52, S75, and S80. Positions 66–85 (TNGHAKGRLSGDEGSEDGDD) are disordered. In terms of domain architecture, POU-specific atypical spans 93–188 (KELQALNTEE…ILRQFNQTVQ (96 aa)). The segment at residues 231–311 (MRRNRFKWGP…NRRKEEAFRQ (81 aa)) is a DNA-binding region (homeobox; HNF1-type). The interval 324 to 370 (HNLNPLLTHGSPHHQPSSSPPNKLSGVRYSQPGNNEVTSSSTISHHG) is disordered. Residues 354-370 (QPGNNEVTSSSTISHHG) are compositionally biased toward polar residues.

Belongs to the HNF1 homeobox family. In terms of assembly, binds DNA as a dimer. Can form homodimer or heterodimer with HNF1-alpha. Interacts (via HNF-p1 domain) with PCBD1; the interaction increases its transactivation activity. Liver, kidney and intestine.

Its subcellular location is the nucleus. Functionally, transcription factor that binds to the inverted palindrome 5'-GTTAATNATTAAC-3'. Binds to the FPC element in the cAMP regulatory unit of the PLAU gene. Transcriptional activity is increased by coactivator PCBD1. This Rattus norvegicus (Rat) protein is Hepatocyte nuclear factor 1-beta (Hnf1b).